The chain runs to 1026 residues: MRFFALFIYRPVATILIAAAITLCGILGFRLLPVAPLPQVDFPVIMVSASLPGASPETMASSVATPLERSLGRIAGVNEMTSSSSLGSTRIILEFNFDRDINGAARDVQAAINAAQSLLPGGMPSRPTYRKANPSDAPIMILTLTSESWSQGKLYDFASTQLAQTIAQIDGVGDVDVGGSSLPAVRVGLNPQALFNQGVSLDEVREAIDSANVRRPQGAIEDSVHRWQIQTNDELKTAAEYQPLIIHYNNGAAVRLGDVASVTDSVQDVRNAGMTNAKPAILLMIRKLPEANIIQTVDGIRAKLPELRAMIPAAIDLQIAQDRSPTIRASLQEVEETLAISVALVILVVFLFLRSGRATLIPAVAVPVSLIGTFAAMYLCGFSLNNLSLMALTIATGFVVDDAIVVLENIARHLEAGMKPLQAALQGTREVGFTVISMSLSLVAVFLPLLLMGGLPGRLLREFAVTLSVAIGISLVVSLTLTPMMCGWMLKSSKPRTQPRKRGVGRLLVALQQGYGTSLKWVLNHTRLVGVVFLGTVALNIWLYIAIPKTFFPEQDTGVLMGGIQADQSISFQAMRGKLQDFMKIIRDDPAVNNVTGFTGGSRVNSGMMFITLKPRGERKETAQQIIDRLRVKLAKEPGARLFLMAVQDIRVGGRQANASYQYTLLSDSLAALREWEPKIRKALSALPQLADVNSDQQDNGAEMNLIYDRDTMSRLGIDVQAANSLLNNAFGQRQISTIYQPMNQYKVVMEVDPRYSQDISALEKMFVINRDGKAIPLSYFAQWRPANAPLSVNHQGLSAASTIAFNLPTGTSLSQATEAINRTMTQLGVPSTVRGSFSGTAQVFQQTMNSQLILIVAAIATVYIVLGILYESYVHPLTILSTLPSAGVGALLALELFNAPFSLIALIGIMLLIGIVKKNAIMMVDFALEAQRSGGLTPEQAIFQACLLRFRPIMMTTLAALFGALPLVLSGGDGSELRQPLGITIVGGLVMSQLLTLYTTPVVYLFFDRLRLRFSRKNSKPVVEI.

Over Met1–Leu6 the chain is Cytoplasmic. The chain crosses the membrane as a helical span at residues Phe7 to Phe29. Residues Arg30–Glu335 are Periplasmic-facing. The chain crosses the membrane as a helical span at residues Glu336–Leu353. At Arg354 to Thr359 the chain is on the cytoplasmic side. A helical transmembrane segment spans residues Leu360 to Leu379. The Periplasmic segment spans residues Cys380–Ser388. Residues Leu389 to Ala411 traverse the membrane as a helical segment. Topologically, residues Arg412–Glu430 are cytoplasmic. Residues Val431 to Gly453 traverse the membrane as a helical segment. At Gly454–Leu467 the chain is on the periplasmic side. A helical membrane pass occupies residues Ser468 to Leu490. Residues Lys491 to Gln852 are Cytoplasmic-facing. The helical transmembrane segment at Leu853–Val875 threads the bilayer. Residues His876 to Ala894 lie on the Periplasmic side of the membrane. The chain crosses the membrane as a helical span at residues Leu895–Val917. Over Lys918–Cys947 the chain is Cytoplasmic. The helical transmembrane segment at Leu948–Leu970 threads the bilayer. The Periplasmic portion of the chain corresponds to Ser971–Ile984. Residues Thr985–Phe1007 traverse the membrane as a helical segment. Topologically, residues Phe1008–Ile1026 are cytoplasmic.

It belongs to the resistance-nodulation-cell division (RND) (TC 2.A.6) family. MdtC subfamily. In terms of assembly, part of a tripartite efflux system composed of MdtA, MdtB and MdtC. MdtC forms a heteromultimer with MdtB.

It is found in the cell inner membrane. The polypeptide is Multidrug resistance protein MdtC (Salmonella typhimurium (strain LT2 / SGSC1412 / ATCC 700720)).